Here is a 280-residue protein sequence, read N- to C-terminus: MGTTNGCAADSVAATYYDSQDADQFYEQVWGGEDIHIGLYATPDEAIATASDRTVHALLDLADPLPQGGCVVDLGAGYGGASRRLARWSERPVHAINISAVENDRHRRLNVDAGLEQQITVHDASFEQVPMADASADLVWSQDAILHAGDRAKVLAEVSRLLKPGGCFVFTDPMAADGVEMGLLQPILDRIHLPDLASPSRYKAWGEAVGLTMEVWDERTEMLVRHYDRVRQDTRLRRAELETSISSGYLDRMDVGLGHWVDGGQQGRLSWGLMRLRKPG.

It belongs to the methyltransferase superfamily. As to quaternary structure, monomer.

The enzyme catalyses N,N-dimethylglycine + S-adenosyl-L-methionine = glycine betaine + S-adenosyl-L-homocysteine + H(+). The protein operates within amine and polyamine biosynthesis; betaine biosynthesis via glycine pathway; betaine from glycine: step 3/3. In terms of biological role, catalyzes the methylation of dimethylglycine to betaine with S-adenosylmethionine (AdoMet) acting as the methyl donor. It has strict specificity for dimethylglycine as the methyl group acceptors. In Parasynechococcus marenigrum (strain WH8102), this protein is Dimethylglycine N-methyltransferase.